Here is a 618-residue protein sequence, read N- to C-terminus: Mitochondrial Rho GTPase 1 (618 aa).

At 1-592 the chain is on the cytoplasmic side; sequence MKKDVRILLV…TQADLKSSTF (592 aa). Residues 2 to 168 form the Miro 1 domain; the sequence is KKDVRILLVG…FYYAQKAVLH (167 aa). GTP contacts are provided by Arg-14, Gly-16, Lys-17, Thr-18, and Ser-19. Mg(2+) is bound at residue Thr-18. Mg(2+)-binding residues include Pro-35 and Asp-57. Residue Ser-59 participates in GTP binding. Lys-92 bears the N6-acetyllysine mark. Asn-118, Lys-119, Asp-121, Ala-149, and Lys-150 together coordinate GTP. A Glycyl lysine isopeptide (Lys-Gly) (interchain with G-Cter in ubiquitin) cross-link involves residue Lys-153. Residues 184–219 enclose the EF-hand 1 domain; sequence ACIKALTRIFKISDQDNDGTLNDAELNFFQRICFNT. Residues Asp-197, Asp-199, Asp-201, Thr-203, and Glu-208 each contribute to the Ca(2+) site. Lys-235 is covalently cross-linked (Glycyl lysine isopeptide (Lys-Gly) (interchain with G-Cter in ubiquitin)). Positions 304–339 constitute an EF-hand 2 domain; the sequence is HAYLFLQSTFDKHDLDRDCALSPDELKDLFKVFPYI. Residues Asp-317, Asp-319, Asp-321, Ala-323, and Glu-328 each coordinate Ca(2+). The Miro 2 domain occupies 416–579; it reads RNVFRCNVIG…FVKLTTMAMY (164 aa). Asn-428, Cys-429, Gly-430, Lys-431, Ser-432, Gly-433, and Lys-447 together coordinate GTP. Residue Asn-428 coordinates Mg(2+). Residues Asn-428, Cys-429, Gly-430, Lys-431, Ser-432, Gly-433, Lys-447, Lys-454, Ser-477, Glu-478, Lys-528, Asp-530, Thr-558, Cys-559, and Asn-560 each contribute to the GDP site. Lys-528, Asp-530, Thr-558, and Cys-559 together coordinate GTP. Residue Lys-572 forms a Glycyl lysine isopeptide (Lys-Gly) (interchain with G-Cter in ubiquitin) linkage. The chain crosses the membrane as a helical; Anchor for type IV membrane protein span at residues 593 to 615; the sequence is WLRASFGATVFAVLGFAMYKALL. The Mitochondrial intermembrane portion of the chain corresponds to 616–618; the sequence is KQR.

This sequence belongs to the mitochondrial Rho GTPase family. In terms of assembly, homodimer. Interacts with the kinesin-binding proteins TRAK1/OIP106 and TRAK2/GRIF1, forming a link between mitochondria and the trafficking apparatus of the microtubules. Interacts with RAP1GDS1. Interacts with ARMCX1. Found in a complex with KIF5B, OGT, RHOT2 and TRAK1. Ubiquitinated by PRKN during mitophagy, leading to its degradation and enhancement of mitophagy. Deubiquitinated by USP30. Post-translationally, acetylation on Lys-92 decreases sensitivity of mitochondrial transport to elevated Ca(2+) levels, increases mitochondrial transport and promotes axon growth. Deacetylated by HDAC6 which blocks mitochondrial transport and mediates axon growth inhibition. As to expression, ubiquitously expressed. Expressed at high level in heart and skeletal muscle.

It is found in the mitochondrion outer membrane. It catalyses the reaction GTP + H2O = GDP + phosphate + H(+). It carries out the reaction ATP + H2O = ADP + phosphate + H(+). The catalysed reaction is UTP + H2O = UDP + phosphate + H(+). Its function is as follows. Atypical mitochondrial nucleoside-triphosphatase (NTPase) involved in mitochondrial trafficking. Probably involved in control of anterograde transport of mitochondria and their subcellular distribution. Promotes mitochondrial fission during high calcium conditions. Can hydrolyze GTP, ATP and UTP. This chain is Mitochondrial Rho GTPase 1 (RHOT1), found in Homo sapiens (Human).